We begin with the raw amino-acid sequence, 315 residues long: Aspartate carbamoyltransferase catalytic subunit (315 aa).

2 residues coordinate carbamoyl phosphate: R65 and T66. K93 contributes to the L-aspartate binding site. Carbamoyl phosphate is bound by residues R115, H145, and Q148. Positions 179 and 234 each coordinate L-aspartate. Residues G275 and P276 each coordinate carbamoyl phosphate.

The protein belongs to the aspartate/ornithine carbamoyltransferase superfamily. ATCase family. Heterododecamer (2C3:3R2) of six catalytic PyrB chains organized as two trimers (C3), and six regulatory PyrI chains organized as three dimers (R2).

The enzyme catalyses carbamoyl phosphate + L-aspartate = N-carbamoyl-L-aspartate + phosphate + H(+). Its pathway is pyrimidine metabolism; UMP biosynthesis via de novo pathway; (S)-dihydroorotate from bicarbonate: step 2/3. In terms of biological role, catalyzes the condensation of carbamoyl phosphate and aspartate to form carbamoyl aspartate and inorganic phosphate, the committed step in the de novo pyrimidine nucleotide biosynthesis pathway. This chain is Aspartate carbamoyltransferase catalytic subunit, found in Xanthomonas oryzae pv. oryzae (strain MAFF 311018).